Consider the following 277-residue polypeptide: UBX domain-containing protein 8 (277 aa).

Residue methionine 1 is a topological domain, cytoplasmic. Residues 2 to 22 (ASRGVVGLFLLSALPLLCLEL) traverse the membrane as a helical segment. Topologically, residues 23 to 33 (RRGIPSLGIKD) are lumenal. The chain crosses the membrane as a helical span at residues 34–54 (LILLSGRIFLLLALLTLVISV). The Cytoplasmic portion of the chain corresponds to 55–277 (TTSWFNSLKP…NVEEKEQSSQ (223 aa)). A disordered region spans residues 64-89 (PSQGHLKEGEKENEKRRRLVRERQQE). Over residues 68–89 (HLKEGEKENEKRRRLVRERQQE) the composition is skewed to basic and acidic residues. The region spanning 193-269 (TAEEVVTVAL…GITVDTVLNV (77 aa)) is the UBX domain.

As to quaternary structure, interacts with SYVN1 and VCP. Highly expressed in gonads. In testis, expressed in post-meiotic round spermatids, while in ovaries it is expressed in granulosa cells.

It localises to the endoplasmic reticulum membrane. Its function is as follows. Involved in endoplasmic reticulum-associated degradation (ERAD) for misfolded lumenal proteins, possibly by tethering VCP to the endoplasmic reticulum membrane. May play a role in reproduction. The polypeptide is UBX domain-containing protein 8 (Ubxn8) (Mus musculus (Mouse)).